Consider the following 455-residue polypeptide: Phosphoglucosamine mutase (455 aa).

Ser108 functions as the Phosphoserine intermediate in the catalytic mechanism. The Mg(2+) site is built by Ser108, Asp246, Asp248, and Asp250. The residue at position 108 (Ser108) is a Phosphoserine.

This sequence belongs to the phosphohexose mutase family. Requires Mg(2+) as cofactor. In terms of processing, activated by phosphorylation.

It catalyses the reaction alpha-D-glucosamine 1-phosphate = D-glucosamine 6-phosphate. In terms of biological role, catalyzes the conversion of glucosamine-6-phosphate to glucosamine-1-phosphate. The chain is Phosphoglucosamine mutase from Frankia alni (strain DSM 45986 / CECT 9034 / ACN14a).